The following is a 485-amino-acid chain: Malonate-semialdehyde dehydrogenase (485 aa).

NAD(+) is bound by residues Phe155, Lys179, Glu182, Arg183, and Ser232. The active-site Nucleophile is the Cys287. Glu386 is an NAD(+) binding site.

It belongs to the aldehyde dehydrogenase family. IolA subfamily. In terms of assembly, homotetramer.

It carries out the reaction 3-oxopropanoate + NAD(+) + CoA + H2O = hydrogencarbonate + acetyl-CoA + NADH + H(+). The catalysed reaction is 2-methyl-3-oxopropanoate + NAD(+) + CoA + H2O = propanoyl-CoA + hydrogencarbonate + NADH + H(+). It functions in the pathway polyol metabolism; myo-inositol degradation into acetyl-CoA; acetyl-CoA from myo-inositol: step 7/7. Catalyzes the oxidation of malonate semialdehyde (MSA) and methylmalonate semialdehyde (MMSA) into acetyl-CoA and propanoyl-CoA, respectively. Is involved in a myo-inositol catabolic pathway. Bicarbonate, and not CO2, is the end-product of the enzymatic reaction. The polypeptide is Malonate-semialdehyde dehydrogenase (Halalkalibacterium halodurans (strain ATCC BAA-125 / DSM 18197 / FERM 7344 / JCM 9153 / C-125) (Bacillus halodurans)).